We begin with the raw amino-acid sequence, 179 residues long: Large ribosomal subunit protein uL6 (179 aa).

Belongs to the universal ribosomal protein uL6 family. Part of the 50S ribosomal subunit.

Its function is as follows. This protein binds to the 23S rRNA, and is important in its secondary structure. It is located near the subunit interface in the base of the L7/L12 stalk, and near the tRNA binding site of the peptidyltransferase center. This Trichlorobacter lovleyi (strain ATCC BAA-1151 / DSM 17278 / SZ) (Geobacter lovleyi) protein is Large ribosomal subunit protein uL6.